The primary structure comprises 430 residues: GTPase Obg (430 aa).

One can recognise an Obg domain in the interval 1–158 (MFVDQVKISL…LDVSLELKLL (158 aa)). A disordered region spans residues 118–145 (KGGRGGRGNSRFATPRNPAPDFSEKGEP). An OBG-type G domain is found at 159–329 (ADVGLVGFPS…LLYAIADKLE (171 aa)). Residues 165–172 (GFPSVGKS), 190–194 (FTTIK), 212–215 (DLPG), 282–285 (NKMD), and 310–312 (STI) each bind GTP. S172 and T192 together coordinate Mg(2+). Positions 352–430 (KHTPSQDKFT…ILGGEFEFVE (79 aa)) constitute an OCT domain.

The protein belongs to the TRAFAC class OBG-HflX-like GTPase superfamily. OBG GTPase family. As to quaternary structure, monomer. Requires Mg(2+) as cofactor.

It localises to the cytoplasm. Functionally, an essential GTPase which binds GTP, GDP and possibly (p)ppGpp with moderate affinity, with high nucleotide exchange rates and a fairly low GTP hydrolysis rate. Plays a role in control of the cell cycle, stress response, ribosome biogenesis and in those bacteria that undergo differentiation, in morphogenesis control. This chain is GTPase Obg, found in Staphylococcus aureus (strain MRSA252).